A 195-amino-acid chain; its full sequence is ATP-dependent Clp protease proteolytic subunit (195 aa).

The active-site Nucleophile is serine 94. Residue histidine 119 is part of the active site.

This sequence belongs to the peptidase S14 family. As to quaternary structure, component of the chloroplastic Clp protease core complex.

Its subcellular location is the plastid. The protein localises to the chloroplast stroma. The enzyme catalyses Hydrolysis of proteins to small peptides in the presence of ATP and magnesium. alpha-casein is the usual test substrate. In the absence of ATP, only oligopeptides shorter than five residues are hydrolyzed (such as succinyl-Leu-Tyr-|-NHMec, and Leu-Tyr-Leu-|-Tyr-Trp, in which cleavage of the -Tyr-|-Leu- and -Tyr-|-Trp bonds also occurs).. Its function is as follows. Cleaves peptides in various proteins in a process that requires ATP hydrolysis. Has a chymotrypsin-like activity. Plays a major role in the degradation of misfolded proteins. The chain is ATP-dependent Clp protease proteolytic subunit from Cycas taitungensis (Prince sago).